Reading from the N-terminus, the 91-residue chain is UPF0250 protein BP0104 (91 aa).

It belongs to the UPF0250 family.

The chain is UPF0250 protein BP0104 from Bordetella pertussis (strain Tohama I / ATCC BAA-589 / NCTC 13251).